Consider the following 306-residue polypeptide: MSEISDAEKRRILREKRQQKFNKGGASSRLAKITGQTENSFLSTESPLDSRESTYPAQETKAPAGNEDSTKQMDELLAKATSKTTSKASSPPGSAEQQNGNPELDLFAQIAKLQQNANNETVSTDPSGTPDIFAQLMASMQQDEAKGGSPGATAQQPIDPAIVEAHNIAVNKLKSYTILVKWLFFLLPYLYYITHSARDPFQHNAVNYVLDRSNFFTVFTTFEIVALSVYYQLLMSAEKSHNVNTLDNNSKILKLVSMVPPGLVPIPNLRGKVAQALQYWDVVSMYLTDLCFAIVLAGLFQYYHSM.

A compositionally biased stretch (basic and acidic residues) spans 1-18 (MSEISDAEKRRILREKRQ). Residues 1–100 (MSEISDAEKR…PPGSAEQQNG (100 aa)) are disordered. At 1 to 172 (MSEISDAEKR…VEAHNIAVNK (172 aa)) the chain is on the cytoplasmic side. Polar residues predominate over residues 34-57 (TGQTENSFLSTESPLDSRESTYPA). Residues 68–77 (DSTKQMDELL) show a composition bias toward basic and acidic residues. A compositionally biased stretch (low complexity) spans 78-90 (AKATSKTTSKASS). The span at 91–100 (PPGSAEQQNG) shows a compositional bias: polar residues. Residues 173–193 (LKSYTILVKWLFFLLPYLYYI) form a helical membrane-spanning segment. The Lumenal portion of the chain corresponds to 194-214 (THSARDPFQHNAVNYVLDRSN). A helical transmembrane segment spans residues 215-234 (FFTVFTTFEIVALSVYYQLL). Residues 235 to 281 (MSAEKSHNVNTLDNNSKILKLVSMVPPGLVPIPNLRGKVAQALQYWD) lie on the Cytoplasmic side of the membrane. A helical membrane pass occupies residues 282–302 (VVSMYLTDLCFAIVLAGLFQY). Over 303–306 (YHSM) the chain is Lumenal.

Belongs to the GET2 family. As to quaternary structure, component of the Golgi to ER traffic (GET) complex, which is composed of GET1, GET2 and GET3. Within the complex, GET1 and GET2 form a heterotetramer which is stabilized by phosphatidylinositol binding and which binds to the GET3 homodimer.

Its subcellular location is the endoplasmic reticulum membrane. The protein resides in the golgi apparatus membrane. Its function is as follows. Required for the post-translational delivery of tail-anchored (TA) proteins to the endoplasmic reticulum. Together with GET1, acts as a membrane receptor for soluble GET3, which recognizes and selectively binds the transmembrane domain of TA proteins in the cytosol. The GET complex cooperates with the HDEL receptor ERD2 to mediate the ATP-dependent retrieval of resident ER proteins that contain a C-terminal H-D-E-L retention signal from the Golgi to the ER. The polypeptide is Golgi to ER traffic protein 2 (Lachancea thermotolerans (strain ATCC 56472 / CBS 6340 / NRRL Y-8284) (Yeast)).